The sequence spans 93 residues: Photosystem I iron-sulfur center (93 aa).

4Fe-4S ferredoxin-type domains lie at 13-43 and 50-80; these read KDHEIRIYSTCIGCTQCVRACPTDVLEMVPS and QVVTVPRIEDCVGCKRCESACPTDFLSIRVY. [4Fe-4S] cluster contacts are provided by Cys-23, Cys-26, Cys-29, Cys-33, Cys-60, Cys-63, Cys-66, and Cys-70.

As to quaternary structure, the eukaryotic PSI reaction center is composed of at least 11 subunits. The cofactor is [4Fe-4S] cluster.

It is found in the plastid. The protein resides in the chloroplast thylakoid membrane. It catalyses the reaction reduced [plastocyanin] + hnu + oxidized [2Fe-2S]-[ferredoxin] = oxidized [plastocyanin] + reduced [2Fe-2S]-[ferredoxin]. In terms of biological role, apoprotein for the two 4Fe-4S centers FA and FB of photosystem I (PSI); essential for photochemical activity. FB is the terminal electron acceptor of PSI, donating electrons to ferredoxin. The C-terminus interacts with PsaA/B/D and helps assemble the protein into the PSI complex. Required for binding of PsaD and PsaE to PSI. PSI is a plastocyanin-ferredoxin oxidoreductase, converting photonic excitation into a charge separation, which transfers an electron from the donor P700 chlorophyll pair to the spectroscopically characterized acceptors A0, A1, FX, FA and FB in turn. The sequence is that of Photosystem I iron-sulfur center from Bigelowiella natans (Pedinomonas minutissima).